The chain runs to 329 residues: Malate dehydrogenase (329 aa).

Residue 12-18 (GAAGQIG) participates in NAD(+) binding. Substrate contacts are provided by arginine 93 and arginine 99. NAD(+)-binding positions include asparagine 106, glutamine 113, and 130 to 132 (TGN). Positions 132 and 163 each coordinate substrate. Histidine 188 functions as the Proton acceptor in the catalytic mechanism.

This sequence belongs to the LDH/MDH superfamily. MDH type 2 family.

It catalyses the reaction (S)-malate + NAD(+) = oxaloacetate + NADH + H(+). Functionally, catalyzes the reversible oxidation of malate to oxaloacetate. This Mycobacterium avium (strain 104) protein is Malate dehydrogenase.